A 456-amino-acid chain; its full sequence is Phospholipase A1 member A (456 aa).

An N-terminal signal peptide occupies residues 1-25; that stretch reads MPPDFWERCFWLWGLLLWLSVGSTG. The N-linked (GlcNAc...) asparagine glycan is linked to N34. S166 functions as the Nucleophile in the catalytic mechanism. Residue D190 is the Charge relay system of the active site. The cysteines at positions 245 and 258 are disulfide-linked. The active-site Charge relay system is the H260. Intrachain disulfides connect C282–C293 and C296–C304.

This sequence belongs to the AB hydrolase superfamily. Lipase family.

It localises to the secreted. It carries out the reaction a 1,2-diacyl-sn-glycero-3-phospho-L-serine + H2O = a 2-acyl-sn-glycero-3-phospho-L-serine + a fatty acid + H(+). The catalysed reaction is 1,2-di-(9Z)-octadecenoyl-sn-glycero-3-phospho-L-serine + H2O = 2-(9Z-octadecenoyl)-sn-glycero-3-phospho-L-serine + (9Z)-octadecenoate + H(+). It catalyses the reaction 1-hexadecanoyl-2-(5Z,8Z,11Z,14Z-eicosatetraenoyl)-sn-glycero-3-phospho-L-serine + H2O = 2-(5Z,8Z,11Z,14Z)-eicosatetraenoyl-sn-glycero-3-phospho-L-serine + hexadecanoate + H(+). The enzyme catalyses a 1-acyl-sn-glycero-3-phospho-L-serine + H2O = sn-glycero-3-phospho-L-serine + a fatty acid + H(+). It carries out the reaction 1-(9Z-octadecenoyl)-sn-glycero-3-phospho-L-serine + H2O = sn-glycero-3-phospho-L-serine + (9Z)-octadecenoate + H(+). Functionally, hydrolyzes the ester bond of the acyl group attached at the sn-1 position of phosphatidylserines (phospholipase A1 activity) and 1-acyl-2-lysophosphatidylserines (lysophospholipase activity) in the pathway of phosphatidylserines acyl chain remodeling. Cleaves phosphatidylserines exposed on the outer leaflet of the plasma membrane of apoptotic cells producing 2-acyl-1-lysophosphatidylserines, which in turn enhance mast cell activation and histamine production. Has no activity toward other glycerophospholipids including phosphatidylcholines, phosphatidylethanolamines, phosphatidic acids or phosphatidylinositols, or glycerolipids such as triolein. This Bos taurus (Bovine) protein is Phospholipase A1 member A (PLA1A).